Consider the following 348-residue polypeptide: MQSFPPEIWHHIFDHLISFDKFEAKNFGGLLRICRSSYVGGLHAIYYFPKLNPRNYHKFVDTISRKPTRKLVHHISLNNVSYASKASITSRLLRRCATNLETFSGPQSGLGFTALRAFSQCQKLKKIDLSILSEKIDLQYLFGGIQHLKHLEYIILPYLSIPAPMCTECWPSSLTFVGFSGGLTDDFLAESVFPPSLKSINITQCPLLTDAGIFSLLSKIGPNLSSVCVQYPMPELSRSGLDCIFQLCPNATTISIPANYITSTAFESIPESGHNVRSLEITYSGSLLTNISLIKADDLVGALVDGKLPNLHRLQWSIRLGWREESQDVQDLLELIDDQDGEVFITVK.

It to yeast YDR306C. Interacts with skp1.

Its subcellular location is the mitochondrion. The polypeptide is Protein pof5 (pof5) (Schizosaccharomyces pombe (strain 972 / ATCC 24843) (Fission yeast)).